Here is a 177-residue protein sequence, read N- to C-terminus: Interleukin-10 (177 aa).

Positions 1-19 are cleaved as a signal peptide; the sequence is MPSSSAVLCCLVFLAGVAA. Cystine bridges form between Cys-31–Cys-127 and Cys-81–Cys-133. An N-linked (GlcNAc...) asparagine glycan is attached at Asn-135.

This sequence belongs to the IL-10 family. As to quaternary structure, homodimer. Interacts with IL10RA and IL10RB.

Its subcellular location is the secreted. In terms of biological role, major immune regulatory cytokine that acts on many cells of the immune system where it has profound anti-inflammatory functions, limiting excessive tissue disruption caused by inflammation. Mechanistically, IL10 binds to its heterotetrameric receptor comprising IL10RA and IL10RB leading to JAK1 and STAT2-mediated phosphorylation of STAT3. In turn, STAT3 translocates to the nucleus where it drives expression of anti-inflammatory mediators. Targets antigen-presenting cells (APCs) such as macrophages and monocytes and inhibits their release of pro-inflammatory cytokines including granulocyte-macrophage colony-stimulating factor /GM-CSF, granulocyte colony-stimulating factor/G-CSF, IL-1 alpha, IL-1 beta, IL-6, IL-8 and TNF-alpha. Also interferes with antigen presentation by reducing the expression of MHC-class II and co-stimulatory molecules, thereby inhibiting their ability to induce T cell activation. In addition, controls the inflammatory response of macrophages by reprogramming essential metabolic pathways including mTOR signaling. In Ovis aries (Sheep), this protein is Interleukin-10 (IL10).